Consider the following 408-residue polypeptide: Dual-specificity RNA methyltransferase RlmN (408 aa).

Glu-120 functions as the Proton acceptor in the catalytic mechanism. The Radical SAM core domain maps to 126-375 (EEGRGTLCIS…IRTPRGRDIL (250 aa)). Cys-133 and Cys-378 are disulfide-bonded. Residues Cys-140, Cys-144, and Cys-147 each coordinate [4Fe-4S] cluster. S-adenosyl-L-methionine-binding positions include 204 to 205 (GE), Ser-236, 258 to 260 (SLH), and Asn-335. The active-site S-methylcysteine intermediate is Cys-378.

It belongs to the radical SAM superfamily. RlmN family. Requires [4Fe-4S] cluster as cofactor.

Its subcellular location is the cytoplasm. The enzyme catalyses adenosine(2503) in 23S rRNA + 2 reduced [2Fe-2S]-[ferredoxin] + 2 S-adenosyl-L-methionine = 2-methyladenosine(2503) in 23S rRNA + 5'-deoxyadenosine + L-methionine + 2 oxidized [2Fe-2S]-[ferredoxin] + S-adenosyl-L-homocysteine. It carries out the reaction adenosine(37) in tRNA + 2 reduced [2Fe-2S]-[ferredoxin] + 2 S-adenosyl-L-methionine = 2-methyladenosine(37) in tRNA + 5'-deoxyadenosine + L-methionine + 2 oxidized [2Fe-2S]-[ferredoxin] + S-adenosyl-L-homocysteine. Specifically methylates position 2 of adenine 2503 in 23S rRNA and position 2 of adenine 37 in tRNAs. m2A2503 modification seems to play a crucial role in the proofreading step occurring at the peptidyl transferase center and thus would serve to optimize ribosomal fidelity. This Rhizobium johnstonii (strain DSM 114642 / LMG 32736 / 3841) (Rhizobium leguminosarum bv. viciae) protein is Dual-specificity RNA methyltransferase RlmN.